The primary structure comprises 178 residues: ATP synthase subunit delta (178 aa).

The protein belongs to the ATPase delta chain family. As to quaternary structure, F-type ATPases have 2 components, F(1) - the catalytic core - and F(0) - the membrane proton channel. F(1) has five subunits: alpha(3), beta(3), gamma(1), delta(1), epsilon(1). F(0) has three main subunits: a(1), b(2) and c(10-14). The alpha and beta chains form an alternating ring which encloses part of the gamma chain. F(1) is attached to F(0) by a central stalk formed by the gamma and epsilon chains, while a peripheral stalk is formed by the delta and b chains.

Its subcellular location is the cell inner membrane. Its function is as follows. F(1)F(0) ATP synthase produces ATP from ADP in the presence of a proton or sodium gradient. F-type ATPases consist of two structural domains, F(1) containing the extramembraneous catalytic core and F(0) containing the membrane proton channel, linked together by a central stalk and a peripheral stalk. During catalysis, ATP synthesis in the catalytic domain of F(1) is coupled via a rotary mechanism of the central stalk subunits to proton translocation. Functionally, this protein is part of the stalk that links CF(0) to CF(1). It either transmits conformational changes from CF(0) to CF(1) or is implicated in proton conduction. The protein is ATP synthase subunit delta of Pseudomonas fluorescens (strain ATCC BAA-477 / NRRL B-23932 / Pf-5).